The following is a 376-amino-acid chain: Carbamoyl phosphate synthase small chain (376 aa).

A CPSase region spans residues M1–E184. Positions 45, 236, and 238 each coordinate L-glutamine. Residues K188 to S374 form the Glutamine amidotransferase type-1 domain. The Nucleophile role is filled by C263. The L-glutamine site is built by L264, Q267, N305, G307, and F308. Catalysis depends on residues H347 and E349.

Belongs to the CarA family. In terms of assembly, composed of two chains; the small (or glutamine) chain promotes the hydrolysis of glutamine to ammonia, which is used by the large (or ammonia) chain to synthesize carbamoyl phosphate. Tetramer of heterodimers (alpha,beta)4.

The catalysed reaction is hydrogencarbonate + L-glutamine + 2 ATP + H2O = carbamoyl phosphate + L-glutamate + 2 ADP + phosphate + 2 H(+). It carries out the reaction L-glutamine + H2O = L-glutamate + NH4(+). Its pathway is amino-acid biosynthesis; L-arginine biosynthesis; carbamoyl phosphate from bicarbonate: step 1/1. It participates in pyrimidine metabolism; UMP biosynthesis via de novo pathway; (S)-dihydroorotate from bicarbonate: step 1/3. Its function is as follows. Small subunit of the glutamine-dependent carbamoyl phosphate synthetase (CPSase). CPSase catalyzes the formation of carbamoyl phosphate from the ammonia moiety of glutamine, carbonate, and phosphate donated by ATP, constituting the first step of 2 biosynthetic pathways, one leading to arginine and/or urea and the other to pyrimidine nucleotides. The small subunit (glutamine amidotransferase) binds and cleaves glutamine to supply the large subunit with the substrate ammonia. The chain is Carbamoyl phosphate synthase small chain from Syntrophotalea carbinolica (strain DSM 2380 / NBRC 103641 / GraBd1) (Pelobacter carbinolicus).